The sequence spans 104 residues: Pyrimidine/purine nucleoside phosphorylase (104 aa).

The protein belongs to the nucleoside phosphorylase PpnP family.

The enzyme catalyses a purine D-ribonucleoside + phosphate = a purine nucleobase + alpha-D-ribose 1-phosphate. It catalyses the reaction adenosine + phosphate = alpha-D-ribose 1-phosphate + adenine. It carries out the reaction cytidine + phosphate = cytosine + alpha-D-ribose 1-phosphate. The catalysed reaction is guanosine + phosphate = alpha-D-ribose 1-phosphate + guanine. The enzyme catalyses inosine + phosphate = alpha-D-ribose 1-phosphate + hypoxanthine. It catalyses the reaction thymidine + phosphate = 2-deoxy-alpha-D-ribose 1-phosphate + thymine. It carries out the reaction uridine + phosphate = alpha-D-ribose 1-phosphate + uracil. The catalysed reaction is xanthosine + phosphate = alpha-D-ribose 1-phosphate + xanthine. Its function is as follows. Catalyzes the phosphorolysis of diverse nucleosides, yielding D-ribose 1-phosphate and the respective free bases. Can use uridine, adenosine, guanosine, cytidine, thymidine, inosine and xanthosine as substrates. Also catalyzes the reverse reactions. The sequence is that of Pyrimidine/purine nucleoside phosphorylase from Trichlorobacter lovleyi (strain ATCC BAA-1151 / DSM 17278 / SZ) (Geobacter lovleyi).